Here is a 418-residue protein sequence, read N- to C-terminus: Thyroid hormone receptor alpha-B (418 aa).

The segment at 1–40 (MDQNLSGLDCLSEPDEKRWPDGKRKRKNSQCMGKSGMSGD) is disordered. The modulating stretch occupies residues 1–60 (MDQNLSGLDCLSEPDEKRWPDGKRKRKNSQCMGKSGMSGDSLVSLPPAGYIPSYLDKDEP). 2 consecutive NR C4-type zinc fingers follow at residues 61 to 81 (CVVC…CEGC) and 99 to 123 (CKYD…FKKC). Positions 61-128 (CVVCSDKATG…RFKKCIAVGM (68 aa)) form a DNA-binding region, nuclear receptor. Residues 171–415 (EEWELIRIVT…PPLFLEVFED (245 aa)) enclose the NR LBD domain.

It belongs to the nuclear hormone receptor family. NR1 subfamily. Binds to thyroid hormone receptor element (TRE) weakly as homodimers and monomers, but binds TRE with much higher affinity as heterodimers with retinoid X receptors. Can bind DNA as a heterodimer with either rxra or rxrg.

It is found in the nucleus. Functionally, high affinity receptor for triiodothyronine (T3). The chain is Thyroid hormone receptor alpha-B (thra-b) from Xenopus laevis (African clawed frog).